A 489-amino-acid polypeptide reads, in one-letter code: tRNA(Ile)-lysidine synthase (489 aa).

35-40 (SGGLDS) provides a ligand contact to ATP.

Belongs to the tRNA(Ile)-lysidine synthase family.

Its subcellular location is the cytoplasm. The enzyme catalyses cytidine(34) in tRNA(Ile2) + L-lysine + ATP = lysidine(34) in tRNA(Ile2) + AMP + diphosphate + H(+). Ligates lysine onto the cytidine present at position 34 of the AUA codon-specific tRNA(Ile) that contains the anticodon CAU, in an ATP-dependent manner. Cytidine is converted to lysidine, thus changing the amino acid specificity of the tRNA from methionine to isoleucine. The chain is tRNA(Ile)-lysidine synthase from Burkholderia pseudomallei (strain K96243).